Consider the following 406-residue polypeptide: 4-hydroxy-3-methylbut-2-en-1-yl diphosphate synthase (ferredoxin) (406 aa).

Cys-315, Cys-318, Cys-349, and Glu-356 together coordinate [4Fe-4S] cluster.

Belongs to the IspG family. It depends on [4Fe-4S] cluster as a cofactor.

It catalyses the reaction (2E)-4-hydroxy-3-methylbut-2-enyl diphosphate + 2 oxidized [2Fe-2S]-[ferredoxin] + H2O = 2-C-methyl-D-erythritol 2,4-cyclic diphosphate + 2 reduced [2Fe-2S]-[ferredoxin] + H(+). It functions in the pathway isoprenoid biosynthesis; isopentenyl diphosphate biosynthesis via DXP pathway; isopentenyl diphosphate from 1-deoxy-D-xylulose 5-phosphate: step 5/6. Converts 2C-methyl-D-erythritol 2,4-cyclodiphosphate (ME-2,4cPP) into 1-hydroxy-2-methyl-2-(E)-butenyl 4-diphosphate. This is 4-hydroxy-3-methylbut-2-en-1-yl diphosphate synthase (ferredoxin) from Microcystis aeruginosa (strain NIES-843 / IAM M-2473).